A 718-amino-acid polypeptide reads, in one-letter code: SANT and BTB domain regulator of class switch recombination (718 aa).

Residues 21–59 form the SANT domain; that stretch reads DMILYPLIGIPQTINWETIARLVPGLTPKECAKRFDELK. The segment covering 118–134 has biased composition (polar residues); the sequence is ASTRNCSSESENCTTHN. Positions 118-142 are disordered; the sequence is ASTRNCSSESENCTTHNGGEMTEES. The 109-residue stretch at 147–255 folds into the BTB domain; it reads MVIHVCDEAK…QCIQYCHKNM (109 aa). The segment covering 555–576 has biased composition (acidic residues); sequence SEEEEYTTGSEVTEDEVGDEEE. Disordered regions lie at residues 555–622 and 692–718; these read SEEE…SPFV and SVPV…GRPA. The span at 580–595 shows a compositional bias: basic residues; the sequence is KQRKKEKPKKFTRQPK. Residues 604 to 615 show a composition bias toward basic and acidic residues; it reads QRKEKALEKSAS.

The protein belongs to the KIAA1841 family. As to quaternary structure, homodimer. Interacts (via the BTB domain) with HDAC1 and NCOR2.

In terms of biological role, negatively regulates class switch recombination or isotype switching in splenic B-cells. The protein is SANT and BTB domain regulator of class switch recombination of Homo sapiens (Human).